The sequence spans 259 residues: FAD-linked sulfhydryl oxidase (259 aa).

The protein belongs to the baculoviridae p33 family. As to quaternary structure, homodimer.

It localises to the host cytoplasm. It is found in the host nucleus. It carries out the reaction 2 R'C(R)SH + O2 = R'C(R)S-S(R)CR' + H2O2. Its function is as follows. Functional FAD-linked sulfhydryl oxidase that is required for infectious budded virion (BV) production and for the formation of enveloped occluded virion (ODV). This chain is FAD-linked sulfhydryl oxidase (P33), found in Lepidoptera (butterflies and moths).